Reading from the N-terminus, the 115-residue chain is Large ribosomal subunit protein P1 (115 aa).

Positions 56-73 (QAAAAPVPASGGAAAPAE) are enriched in low complexity. A disordered region spans residues 56-115 (QAAAAPVPASGGAAAPAEGDADEADEADEEAEEEAADDGGDDDDDEDDEASGEGLGELFG). Residues 74 to 106 (GDADEADEADEEAEEEAADDGGDDDDDEDDEAS) are compositionally biased toward acidic residues.

Belongs to the eukaryotic ribosomal protein P1/P2 family. In terms of assembly, part of the 50S ribosomal subunit. Homodimer, it forms part of the ribosomal stalk which helps the ribosome interact with GTP-bound translation factors. Forms a heptameric uL10/P0(P1)2(P1)2(P1)2 complex, where uL10/P0 forms an elongated spine to which the P1 dimers bind in a sequential fashion.

Its function is as follows. Forms part of the ribosomal stalk, playing a central role in the interaction of the ribosome with GTP-bound translation factors. This is Large ribosomal subunit protein P1 from Haloarcula marismortui (strain ATCC 43049 / DSM 3752 / JCM 8966 / VKM B-1809) (Halobacterium marismortui).